The primary structure comprises 788 residues: Integrin beta-6 (788 aa).

The N-terminal stretch at 1–21 is a signal peptide; the sequence is MGIELLCLFFLFLGRNDHVQG. The PSI domain maps to 22-71; sequence GCALGGAETCEDCLLIGPQCAWCSQENFTYLSGVGERCDTPANLLAKGCQ. The Extracellular portion of the chain corresponds to 22–709; it reads GCALGGAETC…KDCPKPPNSP (688 aa). 28 disulfides stabilise this stretch: Cys23/Cys41, Cys31/Cys454, Cys34/Cys59, Cys44/Cys70, Cys197/Cys204, Cys252/Cys293, Cys394/Cys406, Cys426/Cys452, Cys456/Cys476, Cys467/Cys479, Cys481/Cys490, Cys492/Cys519, Cys502/Cys517, Cys511/Cys522, Cys524/Cys537, Cys539/Cys560, Cys544/Cys558, Cys552/Cys563, Cys565/Cys574, Cys576/Cys599, Cys583/Cys597, Cys591/Cys602, Cys604/Cys614, Cys617/Cys620, Cys624/Cys670, Cys630/Cys649, Cys633/Cys645, and Cys678/Cys702. Asn48 and Asn97 each carry an N-linked (GlcNAc...) asparagine glycan. The VWFA domain occupies 131–371; it reads YPVDLYYLMD…QLIISAYEEL (241 aa). The Mg(2+) site is built by Asp140, Ser142, and Ser144. The Ca(2+) site is built by Ser144, Asp147, Asp148, and Glu179. Ca(2+)-binding residues include Asn235, Asp237, Pro239, and Glu240. A Mg(2+)-binding site is contributed by Glu240. The N-linked (GlcNAc...) asparagine glycan is linked to Asn260. Residues Asp271 and Lys355 each contribute to the Ca(2+) site. A glycan (N-linked (GlcNAc...) asparagine) is linked at Asn387. The N-linked (GlcNAc...) asparagine glycan is linked to Asn418. 4 consecutive I-EGF domains span residues 456 to 491, 492 to 538, 539 to 575, and 576 to 615; these read CQKE…PHCE, CGED…PYCQ, CDDF…EYCN, and CTTS…LTCE. Asn463 and Asn471 each carry an N-linked (GlcNAc...) asparagine glycan. The helical transmembrane segment at 710 to 730 threads the bilayer; sequence MIMLGVSLAILLIGVVLLCIW. Positions 731-758 are interaction with HAX1; the sequence is KLLVSFHDRKEVAKFEAERSKAKWQTGT. The Cytoplasmic portion of the chain corresponds to 731–788; it reads KLLVSFHDRKEVAKFEAERSKAKWQTGTNPLYRGSTSTFKNVTYKHREKQKVDLSMDG.

It belongs to the integrin beta chain family. Heterodimer of an alpha and a beta subunit. Interacts with FLNB. Interacts with HAX1. ITGAV:ITGB6 interacts with FBN1. ITGAV:ITGB6 interacts with TGFB1.

It is found in the cell membrane. Its subcellular location is the cell junction. The protein resides in the focal adhesion. Its function is as follows. Integrin alpha-V:beta-6 (ITGAV:ITGB6) is a receptor for fibronectin and cytotactin. It recognizes the sequence R-G-D in its ligands. ITGAV:ITGB6 acts as a receptor for fibrillin-1 (FBN1) and mediates R-G-D-dependent cell adhesion to FBN1. Integrin alpha-V:beta-6 (ITGAV:ITGB6) mediates R-G-D-dependent release of transforming growth factor beta-1 (TGF-beta-1) from regulatory Latency-associated peptide (LAP), thereby playing a key role in TGF-beta-1 activation. The chain is Integrin beta-6 (ITGB6) from Sus scrofa (Pig).